A 495-amino-acid chain; its full sequence is uncharacterized protein (495 aa).

A run of 12 helical transmembrane segments spans residues 43 to 63 (IIISFMTMLCMYGSSVFMPSI), 75 to 95 (TLVVLGATLYVIGVMLGPLIF), 106 to 126 (PLNIFGYTLFALMQIPTALSV), 128 to 148 (LAMFVVFRFFSGFFGSVGLGI), 168 to 188 (IYFLGICLGPAIAPIASGFIA), 196 to 216 (WEFWILLMLSGVSLLAGVVFL), 284 to 304 (PIMILISLIVGTVYGILYLLF), 323 to 343 (GLTYISLSIGQVFAVFVLLPL), 366 to 386 (PMAFLGCFAIMTGMFIFGWTV), 390 to 410 (VFWFVPLIGTTLVGAGFVMTF), 426 to 446 (ASAMAAIAIPRNIFGACFPLF), and 461 to 481 (SLLAFLLVAINFSIAALYMFG).

This sequence belongs to the major facilitator superfamily. CAR1 family.

The protein localises to the membrane. This is an uncharacterized protein from Schizosaccharomyces pombe (strain 972 / ATCC 24843) (Fission yeast).